The chain runs to 361 residues: sn-glycerol-3-phosphate import ATP-binding protein UgpC (361 aa).

Residues 4-235 enclose the ABC transporter domain; that stretch reads LSLKGVRKSY…PATVFVAGFI (232 aa). Residue 37 to 44 coordinates ATP; that stretch reads GPSGCGKS.

The protein belongs to the ABC transporter superfamily. sn-glycerol-3-phosphate importer (TC 3.A.1.1.3) family. As to quaternary structure, the complex is composed of two ATP-binding proteins (UgpC), two transmembrane proteins (UgpA and UgpE) and a solute-binding protein (UgpB).

It is found in the cell inner membrane. It catalyses the reaction sn-glycerol 3-phosphate(out) + ATP + H2O = sn-glycerol 3-phosphate(in) + ADP + phosphate + H(+). In terms of biological role, part of the ABC transporter complex UgpBAEC involved in sn-glycerol-3-phosphate (G3P) import. Responsible for energy coupling to the transport system. This chain is sn-glycerol-3-phosphate import ATP-binding protein UgpC, found in Burkholderia lata (strain ATCC 17760 / DSM 23089 / LMG 22485 / NCIMB 9086 / R18194 / 383).